Consider the following 402-residue polypeptide: Phosphoglycerate kinase (402 aa).

Residues 24 to 26 (DLN), R39, 62 to 65 (HLGR), R121, and R161 each bind substrate. ATP is bound by residues K211, G299, E330, and 359–362 (GGDS).

This sequence belongs to the phosphoglycerate kinase family. In terms of assembly, monomer.

The protein localises to the cytoplasm. The enzyme catalyses (2R)-3-phosphoglycerate + ATP = (2R)-3-phospho-glyceroyl phosphate + ADP. It functions in the pathway carbohydrate degradation; glycolysis; pyruvate from D-glyceraldehyde 3-phosphate: step 2/5. The sequence is that of Phosphoglycerate kinase from Corynebacterium urealyticum (strain ATCC 43042 / DSM 7109).